The chain runs to 283 residues: Nicotine 6-hydroxylase medium subunit (283 aa).

Residues 1-176 (MKLPAIRYAS…TDVWIPSRPN (176 aa)) form the FAD-binding PCMH-type domain. FAD contacts are provided by residues 31–35 (AGGQS) and 110–114 (TLGGS).

In terms of assembly, heterotrimer composed of a large subunit (NdhL), a medium subunit (NdhM) and a small subunit (NdhS). FAD serves as cofactor.

The protein localises to the cytoplasm. The catalysed reaction is (R)-nicotine + A + H2O = (R)-6-hydroxynicotine + AH2. The enzyme catalyses (S)-nicotine + A + H2O = (S)-6-hydroxynicotine + AH2. The protein operates within alkaloid degradation; nicotine degradation; 6-hydroxypseudooxynicotine from nicotine (R-isomer route): step 1/2. Its pathway is alkaloid degradation; nicotine degradation; 6-hydroxypseudooxynicotine from nicotine (S-isomer route): step 1/2. With respect to regulation, nicotine dehydrogenase activity is inhibited by tungsten. In terms of biological role, component of the nicotine 6-hydroxylase, which is involved in the degradation of nicotine. Catalyzes the hydroxylation of the pyridine ring at C6 to form 6-hydroxynicotine. Can use both L-nicotine and D-nicotine. The chain is Nicotine 6-hydroxylase medium subunit from Paenarthrobacter nicotinovorans (Arthrobacter nicotinovorans).